Reading from the N-terminus, the 305-residue chain is Mitochondrial uncoupling protein 3 (305 aa).

Solcar repeat units follow at residues 14–100 (TRIL…LKGL), 112–204 (LPLA…AKHF), and 213–299 (DNIF…FRLL). A run of 6 helical transmembrane segments spans residues 16-36 (ILLASLSAMVAESVTFPIDLT), 69-89 (VIGLYKGLSPAIIRHLFYTPI), 118-138 (ALVGGFSGVIAQVVASPADLV), 178-198 (KGVLPNIQRAFLVNMGELACY), 219-239 (TLASIMSGLASTSLSCPADVV), and 272-292 (WKGFFPTWARLGPWQFVFWVS).

It belongs to the mitochondrial carrier (TC 2.A.29) family.

The protein localises to the mitochondrion inner membrane. Functionally, PUMPS are mitochondrial transporter proteins that create proton leaks across the inner mitochondrial membrane, thus uncoupling oxidative phosphorylation. This leads to a decrease in the efficiency of oxidative phosphorylation and an increase in heat production. May be involved in protecting plant cells against oxidative stress damage. This Arabidopsis thaliana (Mouse-ear cress) protein is Mitochondrial uncoupling protein 3 (PUMP3).